Reading from the N-terminus, the 387-residue chain is MNIHEYQAKEILSTYGIPVPRNRVALTADQVERAAKMMGGHCVVKAQIYAGGRGKAGGVKLVHHPEQASDVAKELFGKRLVTKQTGPEGLKVRRILVEETVEIAREFYLSITLDRETSRYCLIASAEGGMDIEEVAQKSPDKIHVLTIDPFTGLRTYQARKIALALGLSGAVCEDCVELILNTYKCCLEKDCSLIEINPLVVTRAGWLLAMDAKISFDDNAVYRHREYPDMVDYSQLDPLEITAGKYDLAYIKLTGNIGCMVNGAGLAMATLDVLKEFGGEPANFLDVGGGATREKVAEAFKIILQDSDVKAVFVNIFGGIMRCDVIAQGIIEAANEVHCPLPIVVRMDGSNVEDGKKLLLESGLNVQIGDNLGDGAQKIVAMLAKA.

Residues 9 to 243 (KEILSTYGIP…YSQLDPLEIT (235 aa)) form the ATP-grasp domain. Residues Lys-45, 52-54 (GRG), Glu-98, Val-101, and Glu-106 contribute to the ATP site. Residues Asn-198 and Asp-212 each coordinate Mg(2+). Substrate contacts are provided by residues Asn-263 and 320–322 (GIM).

Belongs to the succinate/malate CoA ligase beta subunit family. In terms of assembly, heterotetramer of two alpha and two beta subunits. The cofactor is Mg(2+).

It catalyses the reaction succinate + ATP + CoA = succinyl-CoA + ADP + phosphate. The catalysed reaction is GTP + succinate + CoA = succinyl-CoA + GDP + phosphate. The protein operates within carbohydrate metabolism; tricarboxylic acid cycle; succinate from succinyl-CoA (ligase route): step 1/1. Its function is as follows. Succinyl-CoA synthetase functions in the citric acid cycle (TCA), coupling the hydrolysis of succinyl-CoA to the synthesis of either ATP or GTP and thus represents the only step of substrate-level phosphorylation in the TCA. The beta subunit provides nucleotide specificity of the enzyme and binds the substrate succinate, while the binding sites for coenzyme A and phosphate are found in the alpha subunit. This Trichlorobacter lovleyi (strain ATCC BAA-1151 / DSM 17278 / SZ) (Geobacter lovleyi) protein is Succinate--CoA ligase [ADP-forming] subunit beta.